A 554-amino-acid polypeptide reads, in one-letter code: Solute carrier family 22 member 2 (554 aa).

Residues methionine 1–threonine 21 lie on the Cytoplasmic side of the membrane. The helical transmembrane segment at phenylalanine 22 to leucine 42 threads the bilayer. Topologically, residues glycine 43–aspartate 149 are extracellular. An N-linked (GlcNAc...) asparagine glycan is attached at asparagine 71. A helical membrane pass occupies residues leucine 150–alanine 170. At aspartate 171–lysine 176 the chain is on the cytoplasmic side. A helical membrane pass occupies residues leucine 177 to proline 197. An N-linked (GlcNAc...) asparagine glycan is attached at asparagine 198. Residues asparagine 198–glutamine 209 lie on the Extracellular side of the membrane. The helical transmembrane segment at glycine 210 to leucine 230 threads the bilayer. Topologically, residues asparagine 231–glycine 237 are cytoplasmic. A helical transmembrane segment spans residues isoleucine 238–leucine 258. Topologically, residues proline 259–arginine 262 are extracellular. Residues tryptophan 263 to proline 283 form a helical membrane-spanning segment. A Proline-rich sequence motif is present at residues proline 283–arginine 287. Residues glutamate 284 to cysteine 348 lie on the Cytoplasmic side of the membrane. Residues isoleucine 349–glycine 369 form a helical membrane-spanning segment. The Extracellular segment spans residues leucine 370–aspartate 374. The helical transmembrane segment at isoleucine 375–alanine 395 threads the bilayer. Residues threonine 396–arginine 403 lie on the Cytoplasmic side of the membrane. A helical membrane pass occupies residues tyrosine 404–proline 424. Residues aspartate 425–leucine 427 are Extracellular-facing. The chain crosses the membrane as a helical span at residues glutamine 428 to cysteine 450. The Cytoplasmic segment spans residues leucine 451–asparagine 463. A helical membrane pass occupies residues leucine 464–valine 484. At tyrosine 485–glutamine 493 the chain is on the extracellular side. A helical transmembrane segment spans residues leucine 494–proline 514. The Cytoplasmic segment spans residues glutamate 515–threonine 554.

This sequence belongs to the major facilitator (TC 2.A.1) superfamily. Organic cation transporter (TC 2.A.1.19) family. Post-translationally, tyrosine phosphorylated. In terms of tissue distribution, expressed in kidney.

Its subcellular location is the basolateral cell membrane. The protein resides in the basal cell membrane. The catalysed reaction is (R)-noradrenaline(out) = (R)-noradrenaline(in). It catalyses the reaction (R)-adrenaline(out) = (R)-adrenaline(in). The enzyme catalyses serotonin(out) = serotonin(in). It carries out the reaction dopamine(out) = dopamine(in). The catalysed reaction is histamine(out) = histamine(in). It catalyses the reaction thiamine(in) = thiamine(out). The enzyme catalyses creatinine(in) = creatinine(out). It carries out the reaction 1-methylnicotinamide(out) = 1-methylnicotinamide(in). The catalysed reaction is guanidine(out) = guanidine(in). It catalyses the reaction choline(out) = choline(in). The enzyme catalyses agmatine(out) = agmatine(in). It carries out the reaction putrescine(out) = putrescine(in). The catalysed reaction is spermidine(in) = spermidine(out). It catalyses the reaction tyramine(in) = tyramine(out). The enzyme catalyses L-histidyl-L-proline diketopiperazine(in) = L-histidyl-L-proline diketopiperazine(out). It carries out the reaction (R)-salsolinol(in) = (R)-salsolinol(out). The catalysed reaction is N-methyl-(R)-salsolinol(in) = N-methyl-(R)-salsolinol(out). It catalyses the reaction acetylcholine(in) = acetylcholine(out). The enzyme catalyses prostaglandin F2alpha(out) = prostaglandin F2alpha(in). It carries out the reaction prostaglandin E2(out) = prostaglandin E2(in). Its activity is regulated as follows. Tyrosine phosphorylation of the transporter leads to activation of the transport activity. Inhibited by cGMP, most likely through a cGMP-binding protein that interacts with OCT2. Electrogenic voltage-dependent transporter that mediates the transport of a variety of organic cations such as endogenous bioactive amines, cationic drugs and xenobiotics. Functions as a Na(+)-independent, bidirectional uniporter. Cation cellular uptake or release is driven by the electrochemical potential, i.e. membrane potential and concentration gradient. However, may also engage electroneutral cation exchange when saturating concentrations of cation substrates are reached. Predominantly expressed at the basolateral membrane of hepatocytes and proximal tubules and involved in the uptake and disposition of cationic compounds by hepatic and renal clearance from the blood flow. Implicated in monoamine neurotransmitters uptake such as histamine, dopamine, adrenaline/epinephrine, noradrenaline/norepinephrine, serotonin and tyramine, thereby supporting a physiological role in the central nervous system by regulating interstitial concentrations of neurotransmitters. Also capable of transporting dopaminergic neuromodulators cyclo(his-pro), salsolinol and N-methyl-salsolinol, thereby involved in the maintenance of dopaminergic cell integrity in the central nervous system. Mediates the bidirectional transport of acetylcholine (ACh) at the apical membrane of ciliated cell in airway epithelium, thereby playing a role in luminal release of ACh from bronchial epithelium. Also transports guanidine and endogenous monoamines such as vitamin B1/thiamine, creatinine and N-1-methylnicotinamide (NMN). Mediates the uptake and efflux of quaternary ammonium compound choline. Mediates the bidirectional transport of polyamine agmatine and the uptake of polyamines putrescine and spermidine. Able to transport non-amine endogenous compounds such as prostaglandin E2 (PGE2) and prostaglandin F2-alpha (PGF2-alpha). Also involved in the uptake of xenobiotic 4-(4-(dimethylamino)styryl)-N-methylpyridinium (ASP). May contribute to regulate the transport of organic compounds in testis across the blood-testis-barrier. In Oryctolagus cuniculus (Rabbit), this protein is Solute carrier family 22 member 2 (SLC22A2).